Reading from the N-terminus, the 393-residue chain is Methylthioribose kinase (393 aa).

Residues asparagine 38, lysine 53, and 107-109 contribute to the ATP site; that span reads EDL. Residue aspartate 225 coordinates substrate. 242–244 provides a ligand contact to ATP; it reads DPE. Arginine 332 serves as a coordination point for substrate.

This sequence belongs to the methylthioribose kinase family. Homodimer.

It catalyses the reaction 5-(methylsulfanyl)-D-ribose + ATP = 5-(methylsulfanyl)-alpha-D-ribose 1-phosphate + ADP + H(+). It participates in amino-acid biosynthesis; L-methionine biosynthesis via salvage pathway; S-methyl-5-thio-alpha-D-ribose 1-phosphate from S-methyl-5'-thioadenosine (hydrolase route): step 2/2. In terms of biological role, catalyzes the phosphorylation of methylthioribose into methylthioribose-1-phosphate. In Bacillus anthracis (strain A0248), this protein is Methylthioribose kinase.